An 843-amino-acid chain; its full sequence is Protein P (843 aa).

The interval 1–177 (MPLSYQHFRK…FCGSPYSWEQ (177 aa)) is terminal protein domain (TP). Residues 178–346 (ELQHGRLVFQ…YCLTHIVNLL (169 aa)) are spacer. 2 disordered regions span residues 220-273 (QSRL…SSTS) and 289-316 (LSTS…RSQS). A compositionally biased stretch (polar residues) spans 289–299 (LSTSKRQSSSG). The segment at 347–690 (EDWGPCTEHG…YLNLYPVARQ (344 aa)) is polymerase/reverse transcriptase domain (RT). Residues 357–600 (EHNIRIPRTP…YSLNFMGYVI (244 aa)) form the Reverse transcriptase domain. The Mg(2+) site is built by Asp-429, Asp-551, and Asp-552.

It belongs to the hepadnaviridae P protein family.

The enzyme catalyses DNA(n) + a 2'-deoxyribonucleoside 5'-triphosphate = DNA(n+1) + diphosphate. It catalyses the reaction Endonucleolytic cleavage to 5'-phosphomonoester.. Its activity is regulated as follows. Activated by host HSP70 and HSP40 in vitro to be able to bind the epsilon loop of the pgRNA. Because deletion of the RNase H region renders the protein partly chaperone-independent, the chaperones may be needed indirectly to relieve occlusion of the RNA-binding site by this domain. Inhibited by several reverse-transcriptase inhibitors: Lamivudine, Adefovir and Entecavir. Functionally, multifunctional enzyme that converts the viral RNA genome into dsDNA in viral cytoplasmic capsids. This enzyme displays a DNA polymerase activity that can copy either DNA or RNA templates, and a ribonuclease H (RNase H) activity that cleaves the RNA strand of RNA-DNA heteroduplexes in a partially processive 3'- to 5'-endonucleasic mode. Neo-synthesized pregenomic RNA (pgRNA) are encapsidated together with the P protein, and reverse-transcribed inside the nucleocapsid. Initiation of reverse-transcription occurs first by binding the epsilon loop on the pgRNA genome, and is initiated by protein priming, thereby the 5'-end of (-)DNA is covalently linked to P protein. Partial (+)DNA is synthesized from the (-)DNA template and generates the relaxed circular DNA (RC-DNA) genome. After budding and infection, the RC-DNA migrates in the nucleus, and is converted into a plasmid-like covalently closed circular DNA (cccDNA). The activity of P protein does not seem to be necessary for cccDNA generation, and is presumably released from (+)DNA by host nuclear DNA repair machinery. The chain is Protein P from Hepatitis B virus genotype C subtype ad (isolate Japan/S-179/1988) (HBV-C).